Reading from the N-terminus, the 318-residue chain is Probable dual-specificity RNA methyltransferase RlmN (318 aa).

The active-site Proton acceptor is Glu-63. A Radical SAM core domain is found at 69–299 (HDYGRTVCVS…VSLRRELGAD (231 aa)). An intrachain disulfide couples Cys-76 to Cys-304. Cys-83, Cys-87, and Cys-90 together coordinate [4Fe-4S] cluster. Residues 130-131 (GE), Ser-162, 185-187 (SLH), and Asn-261 contribute to the S-adenosyl-L-methionine site. Residue Cys-304 is the S-methylcysteine intermediate of the active site.

This sequence belongs to the radical SAM superfamily. RlmN family. The cofactor is [4Fe-4S] cluster.

Its subcellular location is the cytoplasm. The catalysed reaction is adenosine(2503) in 23S rRNA + 2 reduced [2Fe-2S]-[ferredoxin] + 2 S-adenosyl-L-methionine = 2-methyladenosine(2503) in 23S rRNA + 5'-deoxyadenosine + L-methionine + 2 oxidized [2Fe-2S]-[ferredoxin] + S-adenosyl-L-homocysteine. It carries out the reaction adenosine(37) in tRNA + 2 reduced [2Fe-2S]-[ferredoxin] + 2 S-adenosyl-L-methionine = 2-methyladenosine(37) in tRNA + 5'-deoxyadenosine + L-methionine + 2 oxidized [2Fe-2S]-[ferredoxin] + S-adenosyl-L-homocysteine. Functionally, specifically methylates position 2 of adenine 2503 in 23S rRNA and position 2 of adenine 37 in tRNAs. This chain is Probable dual-specificity RNA methyltransferase RlmN, found in Desulforudis audaxviator (strain MP104C).